A 62-amino-acid chain; its full sequence is Ferredoxin-1 (62 aa).

2 4Fe-4S ferredoxin-type domains span residues 2–28 and 29–62; these read ALYITEECTYCGACEPECPTNAISAGS and EIYVIDAASCNECAGFADSPACVAVCPAECIVQG. Cys-9, Cys-12, Cys-15, Cys-19, Cys-38, Cys-41, Cys-50, and Cys-54 together coordinate [4Fe-4S] cluster.

Requires [4Fe-4S] cluster as cofactor.

Its function is as follows. Ferredoxins are iron-sulfur proteins that transfer electrons in a wide variety of metabolic reactions. The polypeptide is Ferredoxin-1 (Chlorobaculum tepidum (strain ATCC 49652 / DSM 12025 / NBRC 103806 / TLS) (Chlorobium tepidum)).